Here is a 177-residue protein sequence, read N- to C-terminus: Large ribosomal subunit protein uL6 (177 aa).

This sequence belongs to the universal ribosomal protein uL6 family. As to quaternary structure, part of the 50S ribosomal subunit.

This protein binds to the 23S rRNA, and is important in its secondary structure. It is located near the subunit interface in the base of the L7/L12 stalk, and near the tRNA binding site of the peptidyltransferase center. This chain is Large ribosomal subunit protein uL6, found in Pseudoalteromonas atlantica (strain T6c / ATCC BAA-1087).